Here is a 221-residue protein sequence, read N- to C-terminus: Probable serine protease inhibitor 6 (221 aa).

The first 22 residues, 1–22 (MKCLFLLCLCLFPIVVFSSTFT), serve as a signal peptide directing secretion. The propeptide occupies 23–28 (SQNPIN). Residues 25 to 30 (NPINLP) carry the Vacuolar targeting signal motif. Disulfide bonds link Cys76–Cys125 and Cys174–Cys191.

It belongs to the protease inhibitor I3 (leguminous Kunitz-type inhibitor) family.

Its subcellular location is the vacuole. Its function is as follows. Inhibitor of trypsin (serine protease). May protect the plant by inhibiting proteases of invading organisms. In Solanum tuberosum (Potato), this protein is Probable serine protease inhibitor 6.